The primary structure comprises 115 residues: MWDPLLNEFPDSVHGLRCMLAIKYLQLVEETYEPNTLGHDLIRDLISVIRARDYAEANRRYTNVKPALEVSSKTELRQPVYQPCCCPHCPRHQASIMDLQAHVSKAADVQNVQKP.

The protein belongs to the geminiviridae protein AV2/V2 family. Interacts with host SGS3.

It is found in the host cytoplasm. The protein localises to the host perinuclear region. In terms of biological role, through its interaction with host SGS3, acts as a suppressor of RNA-mediated gene silencing, also known as post-transcriptional gene silencing (PTGS), a mechanism of plant viral defense that limits the accumulation of viral RNAs. The chain is Protein V2 from Tomato yellow leaf curl Sardinia virus (isolate Spain-2) (TYLCSV).